Consider the following 511-residue polypeptide: Exodeoxyribonuclease 7 large subunit (511 aa).

The protein belongs to the XseA family. Heterooligomer composed of large and small subunits.

The protein resides in the cytoplasm. The catalysed reaction is Exonucleolytic cleavage in either 5'- to 3'- or 3'- to 5'-direction to yield nucleoside 5'-phosphates.. Bidirectionally degrades single-stranded DNA into large acid-insoluble oligonucleotides, which are then degraded further into small acid-soluble oligonucleotides. The chain is Exodeoxyribonuclease 7 large subunit from Brucella melitensis biotype 2 (strain ATCC 23457).